The chain runs to 265 residues: Ubiquinone biosynthesis protein COQ4 homolog, mitochondrial (265 aa).

The Zn(2+) site is built by histidine 162, aspartate 163, histidine 166, and glutamate 178.

It belongs to the COQ4 family. Component of a multi-subunit COQ enzyme complex. The cofactor is Zn(2+).

Its subcellular location is the mitochondrion inner membrane. The enzyme catalyses a 4-hydroxy-3-methoxy-5-(all-trans-polyprenyl)benzoate + H(+) = a 2-methoxy-6-(all-trans-polyprenyl)phenol + CO2. It participates in cofactor biosynthesis; ubiquinone biosynthesis. Lyase that catalyzes the C1-decarboxylation of 4-hydroxy-3-methoxy-5-(all-trans-polyprenyl)benzoic acid into 2-methoxy-6-(all-trans-polyprenyl)phenol during ubiquinone biosynthesis. This is Ubiquinone biosynthesis protein COQ4 homolog, mitochondrial from Drosophila willistoni (Fruit fly).